Consider the following 88-residue polypeptide: Small ribosomal subunit protein bS16 (88 aa).

It belongs to the bacterial ribosomal protein bS16 family.

This is Small ribosomal subunit protein bS16 from Staphylococcus saprophyticus subsp. saprophyticus (strain ATCC 15305 / DSM 20229 / NCIMB 8711 / NCTC 7292 / S-41).